Consider the following 579-residue polypeptide: Polyadenylate-binding protein, cytoplasmic and nuclear (579 aa).

Residues 1–10 (MADITEKTAE) are compositionally biased toward basic and acidic residues. The disordered stretch occupies residues 1–32 (MADITEKTAEQLENLSLQDKQEGTNEENQSET). RRM domains follow at residues 35-113 (ASLY…WSQR), 123-200 (GNIF…PHLS), 216-293 (TNVY…RAQK), and 319-396 (INLF…IAQR). In terms of domain architecture, PABC spans 487–566 (GFARNGPAAN…ASAAYESFKQ (80 aa)). The interval 560–579 (AYESFKQEQQQPQGEEAQQA) is disordered. Positions 566–579 (QEQQQPQGEEAQQA) are enriched in low complexity.

Belongs to the polyadenylate-binding protein type-1 family.

The protein localises to the cytoplasm. It localises to the nucleus. Its function is as follows. Binds the poly(A) tail of mRNA. Appears to be an important mediator of the multiple roles of the poly(A) tail in mRNA biogenesis, stability and translation. In the nucleus, involved in both mRNA cleavage and polyadenylation. Is also required for efficient mRNA export to the cytoplasm. Acts in concert with a poly(A)-specific nuclease (PAN) to affect poly(A) tail shortening, which may occur concomitantly with either nucleocytoplasmic mRNA transport or translational initiation. In the cytoplasm, stimulates translation initiation and regulates mRNA decay through translation termination-coupled poly(A) shortening, probably mediated by PAN. The chain is Polyadenylate-binding protein, cytoplasmic and nuclear (PAB1) from Candida glabrata (strain ATCC 2001 / BCRC 20586 / JCM 3761 / NBRC 0622 / NRRL Y-65 / CBS 138) (Yeast).